A 354-amino-acid polypeptide reads, in one-letter code: Maleylacetate reductase 1 (354 aa).

This sequence belongs to the iron-containing alcohol dehydrogenase family. As to quaternary structure, homodimer.

The enzyme catalyses 3-oxoadipate + NAD(+) = maleylacetate + NADH + H(+). It catalyses the reaction 3-oxoadipate + NADP(+) = maleylacetate + NADPH + H(+). It functions in the pathway aromatic compound metabolism; 3-chlorocatechol degradation. This chain is Maleylacetate reductase 1 (tfdFI), found in Cupriavidus pinatubonensis (strain JMP 134 / LMG 1197) (Cupriavidus necator (strain JMP 134)).